Consider the following 236-residue polypeptide: 2,3,4,5-tetrahydropyridine-2,6-dicarboxylate N-acetyltransferase (236 aa).

It belongs to the transferase hexapeptide repeat family. DapH subfamily.

It carries out the reaction (S)-2,3,4,5-tetrahydrodipicolinate + acetyl-CoA + H2O = L-2-acetamido-6-oxoheptanedioate + CoA. The protein operates within amino-acid biosynthesis; L-lysine biosynthesis via DAP pathway; LL-2,6-diaminopimelate from (S)-tetrahydrodipicolinate (acetylase route): step 1/3. In terms of biological role, catalyzes the transfer of an acetyl group from acetyl-CoA to tetrahydrodipicolinate. In Bacillus velezensis (strain DSM 23117 / BGSC 10A6 / LMG 26770 / FZB42) (Bacillus amyloliquefaciens subsp. plantarum), this protein is 2,3,4,5-tetrahydropyridine-2,6-dicarboxylate N-acetyltransferase.